Here is a 599-residue protein sequence, read N- to C-terminus: Elongation factor 4 (599 aa).

In terms of domain architecture, tr-type G spans 5–187 (SHIRNFSIIA…RLVQSIPAPE (183 aa)). GTP-binding positions include 17–22 (DHGKST) and 134–137 (NKMD).

It belongs to the TRAFAC class translation factor GTPase superfamily. Classic translation factor GTPase family. LepA subfamily.

The protein resides in the cell inner membrane. It catalyses the reaction GTP + H2O = GDP + phosphate + H(+). Its function is as follows. Required for accurate and efficient protein synthesis under certain stress conditions. May act as a fidelity factor of the translation reaction, by catalyzing a one-codon backward translocation of tRNAs on improperly translocated ribosomes. Back-translocation proceeds from a post-translocation (POST) complex to a pre-translocation (PRE) complex, thus giving elongation factor G a second chance to translocate the tRNAs correctly. Binds to ribosomes in a GTP-dependent manner. In Pseudomonas entomophila (strain L48), this protein is Elongation factor 4.